A 237-amino-acid chain; its full sequence is Small ribosomal subunit protein uS2m (237 aa).

The protein belongs to the universal ribosomal protein uS2 family.

It localises to the mitochondrion. This is Small ribosomal subunit protein uS2m (RPS2) from Marchantia polymorpha (Common liverwort).